A 214-amino-acid chain; its full sequence is Adenylate kinase (214 aa).

10–15 provides a ligand contact to ATP; the sequence is GAGKGT. Residues 30 to 59 form an NMP region; it reads STGDMFRDHKARGTEIGKQVQAIMDAGGLV. Residues threonine 31, arginine 36, 57–59, 85–88, and glutamine 92 contribute to the AMP site; these read GLV and GYPR. An LID region spans residues 126 to 163; it reads GRRSCPRCGAVYHVSQNPPHRAGFCDRDDTALVQREDD. Residue arginine 127 participates in ATP binding. Zn(2+)-binding residues include cysteine 130 and cysteine 133. 136-137 provides a ligand contact to ATP; it reads VY. Cysteine 150 and aspartate 153 together coordinate Zn(2+). AMP-binding residues include arginine 160 and arginine 171. Glycine 199 contributes to the ATP binding site.

The protein belongs to the adenylate kinase family. As to quaternary structure, monomer.

It localises to the cytoplasm. It carries out the reaction AMP + ATP = 2 ADP. Its pathway is purine metabolism; AMP biosynthesis via salvage pathway; AMP from ADP: step 1/1. Catalyzes the reversible transfer of the terminal phosphate group between ATP and AMP. Plays an important role in cellular energy homeostasis and in adenine nucleotide metabolism. In Anaeromyxobacter sp. (strain K), this protein is Adenylate kinase.